A 454-amino-acid chain; its full sequence is UPF0210 protein Mlab_1030 (454 aa).

This sequence belongs to the UPF0210 family.

This chain is UPF0210 protein Mlab_1030, found in Methanocorpusculum labreanum (strain ATCC 43576 / DSM 4855 / Z).